Here is a 127-residue protein sequence, read N- to C-terminus: Small ribosomal subunit protein eS8 (127 aa).

This sequence belongs to the eukaryotic ribosomal protein eS8 family. As to quaternary structure, part of the 30S ribosomal subunit.

This chain is Small ribosomal subunit protein eS8, found in Nanoarchaeum equitans (strain Kin4-M).